The chain runs to 1365 residues: Glucosyltransferase-S (1365 aa).

The segment at residues 1-36 is a signal peptide (or 37); sequence MEKNLRYKLHKVKKQWVAIGVTTVTLSFLAGGQVVA. Composition is skewed to polar residues over residues 80–89 and 127–146; these read DQTATSQVSP and RQSA…TSDQ. 2 disordered regions span residues 80–99 and 127–152; these read DQTA…DNQV and RQSA…HLET. Cell wall-binding repeat units lie at residues 146–166 and 168–187; these read QPGH…NGQR and KNYS…QTGE. The tract at residues 200–1000 is catalytic; approximate; sequence QDNVPDSYQA…KPIDPSVKIT (801 aa). Cell wall-binding repeat units lie at residues 1052–1071, 1073–1092, 1093–1112, 1113–1133, 1136–1159, 1160–1179, 1234–1253, 1278–1298, 1299–1318, and 1343–1362; these read ANGF…NGQE, KNRF…DGKM, ATGK…NGKQ, LKEG…NGRT, NKGF…DGTI, AIGL…YGYQ, LTGE…NGVQ, GKGW…SGQV, LTGL…KGIQ, and RDRW…NGLA.

This sequence belongs to the glycosyl hydrolase 70 family.

It carries out the reaction [(1-&gt;6)-alpha-D-glucosyl](n) + sucrose = [(1-&gt;6)-alpha-D-glucosyl](n+1) + D-fructose. With respect to regulation, glucan synthesis by GTF-S is independent of primer glucan unlike GTF-I. Its function is as follows. Production of extracellular glucans, that are thought to play a key role in the development of the dental plaque because of their ability to adhere to smooth surfaces and mediate the aggregation of bacterial cells and food debris. This Streptococcus downei (Streptococcus sobrinus) protein is Glucosyltransferase-S (gtfS).